Consider the following 158-residue polypeptide: Pyruvoyl-dependent arginine decarboxylase (158 aa).

Pyruvic acid (Ser) is present on Ser-44.

Belongs to the PdaD family. The cofactor is pyruvate.

The enzyme catalyses L-arginine + H(+) = agmatine + CO2. The protein is Pyruvoyl-dependent arginine decarboxylase of Thermococcus sibiricus (strain DSM 12597 / MM 739).